A 685-amino-acid polypeptide reads, in one-letter code: Phenoloxidase subunit 1 (685 aa).

Cu cation contacts are provided by H209, H213, and H239. E351 acts as the Proton acceptor in catalysis. 3 residues coordinate Cu cation: H366, H370, and H406. 2 disulfide bridges follow: C580–C622 and C582–C629.

In terms of assembly, heterodimer. Forms a complex with an interleukin 1-like protein as a consequence of a host defense response. Cu(2+) is required as a cofactor. The N-terminus is blocked. As to expression, synthesized by oenocytoids, a type of hemocyte, and released into the hemolymph plasma.

The protein resides in the secreted. The catalysed reaction is 2 L-dopa + O2 = 2 L-dopaquinone + 2 H2O. It carries out the reaction L-tyrosine + O2 = L-dopaquinone + H2O. With respect to regulation, activated by immulectin and lipopolysaccharide. This is a copper-containing oxidase that functions in the formation of pigments such as melanins and other polyphenolic compounds. Catalyzes the rate-limiting conversions of tyrosine to DOPA, DOPA to DOPA-quinone and possibly 5,6 dihydroxyindole to indole-5'6 quinone. Binds to the surface of hemocytes and is involved in hemocyte melanization. The polypeptide is Phenoloxidase subunit 1 (Manduca sexta (Tobacco hawkmoth)).